Consider the following 244-residue polypeptide: Putative quercetin 2,3-dioxygenase Mb0187c (244 aa).

A divalent metal cation is bound by residues H60, H62, H104, and E106.

The protein belongs to the pirin family. Requires a divalent metal cation as cofactor.

The catalysed reaction is quercetin + O2 = 2-(3,4-dihydroxybenzoyloxy)-4,6-dihydroxybenzoate + CO. It functions in the pathway flavonoid metabolism; quercetin degradation. Putative quercetin 2,3-dioxygenase. This is Putative quercetin 2,3-dioxygenase Mb0187c from Mycobacterium bovis (strain ATCC BAA-935 / AF2122/97).